A 180-amino-acid chain; its full sequence is Inner membrane-spanning protein YciB (180 aa).

The next 5 membrane-spanning stretches (helical) occupy residues 10–30 (IIAF…GVLM), 47–67 (ITTR…VTLL), 74–94 (IKMK…GGLI), 121–141 (YAWI…AEFW), and 151–171 (VFGI…YMYH).

Belongs to the YciB family.

The protein resides in the cell inner membrane. Plays a role in cell envelope biogenesis, maintenance of cell envelope integrity and membrane homeostasis. This chain is Inner membrane-spanning protein YciB, found in Idiomarina loihiensis (strain ATCC BAA-735 / DSM 15497 / L2-TR).